The primary structure comprises 500 residues: Glycerol kinase (500 aa).

T11 is an ADP binding site. ATP contacts are provided by T11, T12, and S13. Position 11 (T11) interacts with sn-glycerol 3-phosphate. Residue R15 participates in ADP binding. Residues R81, E82, Y133, and D242 each contribute to the sn-glycerol 3-phosphate site. Glycerol is bound by residues R81, E82, Y133, D242, and Q243. The ADP site is built by T264 and G307. Residues T264, G307, Q311, and G411 each coordinate ATP. ADP is bound at residue G411.

The protein belongs to the FGGY kinase family.

It carries out the reaction glycerol + ATP = sn-glycerol 3-phosphate + ADP + H(+). Its pathway is polyol metabolism; glycerol degradation via glycerol kinase pathway; sn-glycerol 3-phosphate from glycerol: step 1/1. Inhibited by fructose 1,6-bisphosphate (FBP). Its function is as follows. Key enzyme in the regulation of glycerol uptake and metabolism. Catalyzes the phosphorylation of glycerol to yield sn-glycerol 3-phosphate. In Bradyrhizobium sp. (strain ORS 278), this protein is Glycerol kinase.